The following is a 726-amino-acid chain: Catalase-peroxidase (726 aa).

A disordered region spans residues M1 to S33. Positions W105 to Y226 form a cross-link, tryptophyl-tyrosyl-methioninium (Trp-Tyr) (with M-252). H106 serves as the catalytic Proton acceptor. The tryptophyl-tyrosyl-methioninium (Tyr-Met) (with W-105) cross-link spans Y226–M252. H267 lines the heme b pocket.

It belongs to the peroxidase family. Peroxidase/catalase subfamily. Homodimer or homotetramer. Heme b serves as cofactor. In terms of processing, formation of the three residue Trp-Tyr-Met cross-link is important for the catalase, but not the peroxidase activity of the enzyme.

The catalysed reaction is H2O2 + AH2 = A + 2 H2O. It carries out the reaction 2 H2O2 = O2 + 2 H2O. Its function is as follows. Bifunctional enzyme with both catalase and broad-spectrum peroxidase activity. This Salmonella schwarzengrund (strain CVM19633) protein is Catalase-peroxidase.